We begin with the raw amino-acid sequence, 553 residues long: Transcriptional regulator HilA (553 aa).

Positions 11–107 form a DNA-binding region, ompR/PhoB-type; the sequence is NKKFVFDDFI…LYGQGYRFNR (97 aa). Asp62 carries the 4-aspartylphosphate modification. A TPR repeat occupies 372–405; that stretch reads ADIKYYYGWNLFMAGQLEEALQTINECLKLDPTR.

The main transcriptional regulator of the Salmonella pathogenicity island 1 (SPI1) gene expression. Activates the expression of invasion genes by a direct action at their promoters and also indirectly by increasing the level of InvF. Also binds upstream of prgH and directly activates the expression of prgHIJK operon. The sequence is that of Transcriptional regulator HilA (hilA) from Salmonella typhimurium (strain LT2 / SGSC1412 / ATCC 700720).